Reading from the N-terminus, the 440-residue chain is Sorting nexin-31 (440 aa).

One can recognise a PX domain in the interval 1 to 109 (MKMHFCIPVS…EFLKLAQLNT (109 aa)).

It belongs to the sorting nexin family. In terms of assembly, interacts with CCDC22, CCDC93, VPS26C and VPS35L, associates with the retriever and CCC complexes.

May be involved in protein trafficking. This chain is Sorting nexin-31 (SNX31), found in Homo sapiens (Human).